Reading from the N-terminus, the 71-residue chain is Omega-conotoxin-like CnVIIF (71 aa).

Cystine bridges form between C46–C61, C53–C65, and C60–C70. Residue C70 is modified to Cysteine amide; in CnVIID.

The protein belongs to the conotoxin M superfamily. As to expression, expressed by the venom duct.

It is found in the secreted. Its function is as follows. Omega-conotoxins act at presynaptic membranes, they bind and block voltage-gated calcium channels (Cav). This chain is Omega-conotoxin-like CnVIIF, found in Conus consors (Singed cone).